Here is a 525-residue protein sequence, read N- to C-terminus: MTKNIHKHRILILDFGSQYTQLVARRVREIGVYCELWAWDVSEEQIREFNPSGIILSGGPESTTEANSPRAPEYVFTAGVPVLGVCYGMQTMAMQLGGQVEGSNEREFGYAQVEITTESALVRDIEDALSPAGKPLLDVWMSHGDKVTAIPADFVTVASTDTCPFAIMANEEKRFYGVQFHPEVTHTRQGQRMLERFVLDICQCEALWTPATIIEDAVERIRQQVGEDHVILGLSGGVDSSVTAMLLHRAIGKRLTCVFVDNGLLRLNEAEQVLEMFGDHFGLNIVHVAAEDRFLSALAGVDEPEAKRKIIGRVFVELFDEEACKQSEVKWLAQGTIYPDVIESAASATGKAHVIKSHHNVGGLPKEMKLGLVEPLKELFKDEVRKIGLELGLPYDMLFRHPFPGPGLGVRVLGEVKKEYCDLLRRADAIFIEELHKADLYNKVSQAFTVFLPVRSVGVMGDGRKYDWVVSLRAVETIDFMTAHWAHLPYDFLGRVSNRIINEVNGISRVVYDISGKPPATIEWE.

The region spanning 9 to 207 is the Glutamine amidotransferase type-1 domain; the sequence is RILILDFGSQ…VLDICQCEAL (199 aa). Cys-86 functions as the Nucleophile in the catalytic mechanism. Active-site residues include His-181 and Glu-183. The GMPS ATP-PPase domain occupies 208-400; it reads WTPATIIEDA…LGLPYDMLFR (193 aa). 235–241 provides a ligand contact to ATP; that stretch reads SGGVDSS.

In terms of assembly, homodimer.

The enzyme catalyses XMP + L-glutamine + ATP + H2O = GMP + L-glutamate + AMP + diphosphate + 2 H(+). It functions in the pathway purine metabolism; GMP biosynthesis; GMP from XMP (L-Gln route): step 1/1. In terms of biological role, catalyzes the synthesis of GMP from XMP. In Serratia proteamaculans (strain 568), this protein is GMP synthase [glutamine-hydrolyzing].